The primary structure comprises 550 residues: Dihydroxy-acid dehydratase (550 aa).

Position 78 (aspartate 78) interacts with Mg(2+). Cysteine 119 contacts [2Fe-2S] cluster. The Mg(2+) site is built by aspartate 120 and lysine 121. Position 121 is an N6-carboxylysine (lysine 121). Cysteine 191 contributes to the [2Fe-2S] cluster binding site. Glutamate 440 lines the Mg(2+) pocket. Residue serine 466 is the Proton acceptor of the active site.

The protein belongs to the IlvD/Edd family. Homodimer. [2Fe-2S] cluster is required as a cofactor. It depends on Mg(2+) as a cofactor.

It catalyses the reaction (2R)-2,3-dihydroxy-3-methylbutanoate = 3-methyl-2-oxobutanoate + H2O. The catalysed reaction is (2R,3R)-2,3-dihydroxy-3-methylpentanoate = (S)-3-methyl-2-oxopentanoate + H2O. It participates in amino-acid biosynthesis; L-isoleucine biosynthesis; L-isoleucine from 2-oxobutanoate: step 3/4. It functions in the pathway amino-acid biosynthesis; L-valine biosynthesis; L-valine from pyruvate: step 3/4. In terms of biological role, functions in the biosynthesis of branched-chain amino acids. Catalyzes the dehydration of (2R,3R)-2,3-dihydroxy-3-methylpentanoate (2,3-dihydroxy-3-methylvalerate) into 2-oxo-3-methylpentanoate (2-oxo-3-methylvalerate) and of (2R)-2,3-dihydroxy-3-methylbutanoate (2,3-dihydroxyisovalerate) into 2-oxo-3-methylbutanoate (2-oxoisovalerate), the penultimate precursor to L-isoleucine and L-valine, respectively. The chain is Dihydroxy-acid dehydratase from Methanococcus maripaludis (strain C5 / ATCC BAA-1333).